The following is a 278-amino-acid chain: MALKHYNPTSPARRGLILVDKSGLHKGKPVKALTEGKRKSGGRNNQGHATARGIAGGHKQKYRIVDFKRRKWDQPATVERLEYDPNRSAFIALVKYEDGELAYILAPQRLAAGDVVLAAKKTDTKPGNAMEIGQAPVGTIVHNVEMKPGKGGQIARAAGTYVQIVGRDKGMVMVRLNSGEQRYIRSDCMCTVGAVSNPDNANQNLAKAGRNRWLGRRPLTRGVAKNPVDHPHGGGEGRTSGGRHPVTPWGKPTKGARTRHNKATDKFIIRSRHAKKKR.

2 disordered regions span residues 28-56 (KPVK…GIAG) and 221-278 (RGVA…KKKR). Over residues 269–278 (IRSRHAKKKR) the composition is skewed to basic residues.

The protein belongs to the universal ribosomal protein uL2 family. As to quaternary structure, part of the 50S ribosomal subunit. Forms a bridge to the 30S subunit in the 70S ribosome.

Functionally, one of the primary rRNA binding proteins. Required for association of the 30S and 50S subunits to form the 70S ribosome, for tRNA binding and peptide bond formation. It has been suggested to have peptidyltransferase activity; this is somewhat controversial. Makes several contacts with the 16S rRNA in the 70S ribosome. This chain is Large ribosomal subunit protein uL2, found in Rhizorhabdus wittichii (strain DSM 6014 / CCUG 31198 / JCM 15750 / NBRC 105917 / EY 4224 / RW1) (Sphingomonas wittichii).